A 329-amino-acid chain; its full sequence is Ceramide synthase hyl-2 (329 aa).

An N-linked (GlcNAc...) asparagine glycan is attached at asparagine 22. A run of 7 helical transmembrane segments spans residues 41–61 (VLTGISLIIYRFVFENYIFVP), 95–115 (ALYYTISFVCGLYLVLHESHL), 134–154 (VAWYYWIQGGFYIALVFGILF), 162–182 (FWQMLVHHFITLALIGVSWTM), 187–207 (VGTLILVSHDAVDILIDVGKI), 221–241 (FAGVLFVWVATRLVYYPFWII), and 270–290 (FIMLLLTALLILHIFWAYILF). The TLC domain maps to 86 to 298 (SRMAECAMRA…LFKIAYDTIQ (213 aa)).

It belongs to the sphingosine N-acyltransferase family. As to expression, strong expression in the gut, the posterior bulb of the pharynx, the hypoderm, and unidentified cells of the head and the tail.

The protein localises to the membrane. It catalyses the reaction a very long-chain fatty acyl-CoA + a sphingoid base = an N-(very-long-chain fatty acyl)-sphingoid base + CoA + H(+). It carries out the reaction a fatty acyl-CoA + sphinganine = an N-acylsphinganine + CoA + H(+). The enzyme catalyses docosanoyl-CoA + sphinganine = N-docosanoylsphinganine + CoA + H(+). The catalysed reaction is sphinganine + tetradecanoyl-CoA = N-(tetradecanoyl)-sphinganine + CoA + H(+). It catalyses the reaction eicosanoyl-CoA + sphinganine = N-eicosanoylsphinganine + CoA + H(+). It carries out the reaction 15-methylhexadecasphinganine + a fatty acyl-CoA = an N-acyl-15-methylhexadecasphinganine + CoA + H(+). Its pathway is lipid metabolism; sphingolipid metabolism. In terms of biological role, catalyzes the acylation of sphingoid bases to form ceramides, which are key players in cell signaling events such as tolerances to heat, oxidation, and ultraviolet stress. C.elegans contain specific sphingoid bases, which are unique or different in structure compared to the sphingoid bases found in other animals. Two examples of these distinctive compounds are: 15-methylhexadecasphinganine and 15-methylhexadecasphing-4-enine. Exhibits substrate preference for long and very long fatty acyl-coA chains (C20-23). Required for adaptation of the nematode to anoxia. Anoxia tolerance may require one or more of the ceramide species that are either specifically or preferentially synthesized by HYL-2, and seems to be affected by a pathway that is parallel to that involving daf-2. The protein is Ceramide synthase hyl-2 (hyl-2) of Caenorhabditis elegans.